We begin with the raw amino-acid sequence, 187 residues long: ATP synthase subunit b, chloroplastic (187 aa).

The chain crosses the membrane as a helical span at residues 34–56 (LINLAAVIGLLFYSGRSFLTNLL).

It belongs to the ATPase B chain family. F-type ATPases have 2 components, F(1) - the catalytic core - and F(0) - the membrane proton channel. F(1) has five subunits: alpha(3), beta(3), gamma(1), delta(1), epsilon(1). F(0) has four main subunits: a(1), b(1), b'(1) and c(10-14). The alpha and beta chains form an alternating ring which encloses part of the gamma chain. F(1) is attached to F(0) by a central stalk formed by the gamma and epsilon chains, while a peripheral stalk is formed by the delta, b and b' chains.

The protein resides in the plastid. The protein localises to the chloroplast thylakoid membrane. Functionally, f(1)F(0) ATP synthase produces ATP from ADP in the presence of a proton or sodium gradient. F-type ATPases consist of two structural domains, F(1) containing the extramembraneous catalytic core and F(0) containing the membrane proton channel, linked together by a central stalk and a peripheral stalk. During catalysis, ATP synthesis in the catalytic domain of F(1) is coupled via a rotary mechanism of the central stalk subunits to proton translocation. Component of the F(0) channel, it forms part of the peripheral stalk, linking F(1) to F(0). The chain is ATP synthase subunit b, chloroplastic from Chlorokybus atmophyticus (Soil alga).